Reading from the N-terminus, the 322-residue chain is Sideroflexin-1 (322 aa).

Ser2 bears the N-acetylserine mark. Over 2-102 (SGELPPNINI…MSAQVPMNMT (101 aa)) the chain is Mitochondrial matrix. The helical transmembrane segment at 103-120 (ITGCMMTFYRTTPAVLFW) threads the bilayer. The Mitochondrial intermembrane segment spans residues 121–146 (QWINQSFNAVVNYTNRSGDAPLTVNE). A helical transmembrane segment spans residues 147 to 167 (LGTAYVSATTGAVATALGLNA). The Mitochondrial matrix portion of the chain corresponds to 168 to 174 (LTKHVSP). Residues 175–195 (LIGRFVPFAAVAAANCINIPL) traverse the membrane as a helical segment. Topologically, residues 196–228 (MRQRELRAGIPVTDENGNRLGESANAAKQAITQ) are mitochondrial intermembrane. The chain crosses the membrane as a helical span at residues 229–249 (VVISRILMAAPGMAIPPFIMN). Topologically, residues 250–266 (TLEKKAFLKRFPWMSAP) are mitochondrial matrix. A helical membrane pass occupies residues 267 to 287 (IQVGLVGFCLVFATPLCCALF). At 288–322 (PQKSSMSVTSLEAELQAKIRETSPELRRVYFNKGL) the chain is on the mitochondrial intermembrane side.

This sequence belongs to the sideroflexin family.

Its subcellular location is the mitochondrion inner membrane. It carries out the reaction L-serine(in) = L-serine(out). It catalyses the reaction L-alanine(in) = L-alanine(out). The enzyme catalyses L-cysteine(in) = L-cysteine(out). In terms of biological role, amino acid transporter importing serine, an essential substrate of the mitochondrial branch of the one-carbon pathway, into mitochondria. Mitochondrial serine is then converted to glycine and formate, which exits to the cytosol where it is used to generate the charged folates that serve as one-carbon donors. May also transport other amino acids including alanine and cysteine. This is Sideroflexin-1 (SFXN1) from Sus scrofa (Pig).